A 636-amino-acid chain; its full sequence is Chaperone protein DnaK (636 aa).

Thr198 bears the Phosphothreonine; by autocatalysis mark. Residues 598–636 (YAAKEQPGEHGETGSGEQARKESGKDENVVDADFEEVKK) form a disordered region. A compositionally biased stretch (basic and acidic residues) spans 603-625 (QPGEHGETGSGEQARKESGKDEN). Residues 626–636 (VVDADFEEVKK) show a composition bias toward acidic residues.

This sequence belongs to the heat shock protein 70 family.

Its function is as follows. Acts as a chaperone. The chain is Chaperone protein DnaK from Pelobacter propionicus (strain DSM 2379 / NBRC 103807 / OttBd1).